Consider the following 382-residue polypeptide: Mannitol-1-phosphate 5-dehydrogenase (382 aa).

3–14 contributes to the NAD(+) binding site; that stretch reads ALHFGAGNIGRG. An N6-acetyllysine modification is found at K269.

This sequence belongs to the mannitol dehydrogenase family.

It catalyses the reaction D-mannitol 1-phosphate + NAD(+) = beta-D-fructose 6-phosphate + NADH + H(+). The protein is Mannitol-1-phosphate 5-dehydrogenase of Shigella sonnei (strain Ss046).